Consider the following 325-residue polypeptide: Elongation factor P--(R)-beta-lysine ligase (325 aa).

76–78 (SPE) provides a ligand contact to substrate. ATP-binding positions include 100 to 102 (RNE) and asparagine 109. Tyrosine 118 contacts substrate. An ATP-binding site is contributed by 244-245 (EL). Glutamate 251 contacts substrate. Glycine 300 lines the ATP pocket.

This sequence belongs to the class-II aminoacyl-tRNA synthetase family. EpmA subfamily. In terms of assembly, homodimer.

It catalyses the reaction D-beta-lysine + L-lysyl-[protein] + ATP = N(6)-((3R)-3,6-diaminohexanoyl)-L-lysyl-[protein] + AMP + diphosphate + H(+). Functionally, with EpmB is involved in the beta-lysylation step of the post-translational modification of translation elongation factor P (EF-P). Catalyzes the ATP-dependent activation of (R)-beta-lysine produced by EpmB, forming a lysyl-adenylate, from which the beta-lysyl moiety is then transferred to the epsilon-amino group of a conserved specific lysine residue in EF-P. This chain is Elongation factor P--(R)-beta-lysine ligase, found in Klebsiella pneumoniae (strain 342).